A 562-amino-acid chain; its full sequence is MNMLYFVLALLVGLAGGFFVGQARGRQQRATLDDQLQREARAEAERIRTQADAEARQLREQAEQRLQDAARRLQEADDRERQVTLQLEAQREQLQAVRAQIEAERARAAQDAARERETLSADRQETRREREELKREIERLNRRAEQLDARGDKLDALEERLEGQLHALAQQEAELAERSRQVDLKLYEVAGLTPEAAREQILRQLDAELEEEKAIRVKAMTERATAEARRTARNVIAQAIQRSASETSSQMSVSVVPIPNDAMKGRLIGREGRNIRAFEALTGVDLIIDDTPEAVILSSFNPVRREVARHVLEALVADGRIHPTRIEEMVHKAQDEMKSFIHAQGEEAAIESGVVGLKPGLVQLLGRMYFRSSYGQNVLKHSVQVAHLTGIMADELGLDAALARRAGLMHDIGKSIDREIEGTHVEIGINLAKRFGEPPEVIDAIAHHHDPENGETLYSVLVAAADAISAARPGARREELEAYVRRLEQLEQIAIAFPGVQQAYAIQAGREVRVLVQPEKVTDAQATLLAREIAGRIEQDMEYPGQVQVTVVRESRAVEVAR.

The helical transmembrane segment at 1–21 (MNMLYFVLALLVGLAGGFFVG) threads the bilayer. A disordered region spans residues 108–129 (AAQDAARERETLSADRQETRRE). A KH domain is found at 252–312 (SVSVVPIPND…VRREVARHVL (61 aa)). In terms of domain architecture, HD spans 378 to 471 (VLKHSVQVAH…VAAADAISAA (94 aa)).

It belongs to the RNase Y family.

The protein resides in the cell membrane. Its function is as follows. Endoribonuclease that initiates mRNA decay. This Deinococcus geothermalis (strain DSM 11300 / CIP 105573 / AG-3a) protein is Ribonuclease Y.